Consider the following 407-residue polypeptide: Multifunctional CCA protein (407 aa).

ATP is bound by residues Gly-8 and Arg-11. CTP contacts are provided by Gly-8 and Arg-11. 2 residues coordinate Mg(2+): Asp-21 and Asp-23. ATP is bound by residues Arg-91, Arg-137, and Arg-140. Positions 91, 137, and 140 each coordinate CTP. An HD domain is found at 225–326 (CGDHVMRVLD…LRLLKDCDAL (102 aa)).

This sequence belongs to the tRNA nucleotidyltransferase/poly(A) polymerase family. Bacterial CCA-adding enzyme type 1 subfamily. As to quaternary structure, monomer. Can also form homodimers and oligomers. Mg(2+) serves as cofactor. Ni(2+) is required as a cofactor.

The catalysed reaction is a tRNA precursor + 2 CTP + ATP = a tRNA with a 3' CCA end + 3 diphosphate. It carries out the reaction a tRNA with a 3' CCA end + 2 CTP + ATP = a tRNA with a 3' CCACCA end + 3 diphosphate. In terms of biological role, catalyzes the addition and repair of the essential 3'-terminal CCA sequence in tRNAs without using a nucleic acid template. Adds these three nucleotides in the order of C, C, and A to the tRNA nucleotide-73, using CTP and ATP as substrates and producing inorganic pyrophosphate. tRNA 3'-terminal CCA addition is required both for tRNA processing and repair. Also involved in tRNA surveillance by mediating tandem CCA addition to generate a CCACCA at the 3' terminus of unstable tRNAs. While stable tRNAs receive only 3'-terminal CCA, unstable tRNAs are marked with CCACCA and rapidly degraded. This Chromobacterium violaceum (strain ATCC 12472 / DSM 30191 / JCM 1249 / CCUG 213 / NBRC 12614 / NCIMB 9131 / NCTC 9757 / MK) protein is Multifunctional CCA protein.